The following is a 270-amino-acid chain: Glutamate 5-kinase (270 aa).

Lys-17 contacts ATP. 3 residues coordinate substrate: Ser-57, Asp-144, and Asn-160. ATP is bound by residues Ser-180–Asp-181 and Thr-222–Lys-228.

This sequence belongs to the glutamate 5-kinase family.

The protein localises to the cytoplasm. The catalysed reaction is L-glutamate + ATP = L-glutamyl 5-phosphate + ADP. The protein operates within amino-acid biosynthesis; L-proline biosynthesis; L-glutamate 5-semialdehyde from L-glutamate: step 1/2. In terms of biological role, catalyzes the transfer of a phosphate group to glutamate to form L-glutamate 5-phosphate. This Lactococcus lactis subsp. lactis (strain IL1403) (Streptococcus lactis) protein is Glutamate 5-kinase.